The sequence spans 352 residues: S-adenosylmethionine:tRNA ribosyltransferase-isomerase (352 aa).

Belongs to the QueA family. In terms of assembly, monomer.

Its subcellular location is the cytoplasm. It carries out the reaction 7-aminomethyl-7-carbaguanosine(34) in tRNA + S-adenosyl-L-methionine = epoxyqueuosine(34) in tRNA + adenine + L-methionine + 2 H(+). Its pathway is tRNA modification; tRNA-queuosine biosynthesis. Transfers and isomerizes the ribose moiety from AdoMet to the 7-aminomethyl group of 7-deazaguanine (preQ1-tRNA) to give epoxyqueuosine (oQ-tRNA). This chain is S-adenosylmethionine:tRNA ribosyltransferase-isomerase, found in Cupriavidus necator (strain ATCC 17699 / DSM 428 / KCTC 22496 / NCIMB 10442 / H16 / Stanier 337) (Ralstonia eutropha).